The primary structure comprises 360 residues: Heme A synthase (360 aa).

8 helical membrane-spanning segments follow: residues 29 to 49 (WLFLMAALVVAMVAVGGATRL), 111 to 131 (FLGRLIGLCFFLPLGWFWWTG), 139 to 159 (LGLVGLGVLGGLQGAVGWIMV), 175 to 195 (LAAHLTLASAIFAGLVWLAAG), 210 to 230 (LTALLLPVATLLQIALGGLVA), 269 to 289 (VALVQLNHRLVAYALLALALL), 309 to 329 (ALAGLVAAQAMLGITTLLLAV), and 330 to 350 (PLWAGLAHQVTAMLVLGMAVA). Heme is bound at residue His-276. His-337 is a binding site for heme.

The protein belongs to the COX15/CtaA family. Type 2 subfamily. As to quaternary structure, interacts with CtaB. Heme b is required as a cofactor.

Its subcellular location is the cell membrane. It catalyses the reaction Fe(II)-heme o + 2 A + H2O = Fe(II)-heme a + 2 AH2. It participates in porphyrin-containing compound metabolism; heme A biosynthesis; heme A from heme O: step 1/1. Its function is as follows. Catalyzes the conversion of heme O to heme A by two successive hydroxylations of the methyl group at C8. The first hydroxylation forms heme I, the second hydroxylation results in an unstable dihydroxymethyl group, which spontaneously dehydrates, resulting in the formyl group of heme A. The polypeptide is Heme A synthase (Methylobacterium sp. (strain 4-46)).